The sequence spans 117 residues: Probable non-functional T cell receptor gamma variable (117 aa).

An N-terminal signal peptide occupies residues 1–20; it reads MRWALAVLLAFLSPASQISS. In terms of domain architecture, Ig-like spans 21 to 117; it reads NLEGRTKSVT…GFYYCATWDR (97 aa). A disulfide bridge links Cys41 with Cys112. Asn105 is a glycosylation site (N-linked (GlcNAc...) asparagine).

In terms of assembly, gamma-delta TR is a heterodimer composed of a gamma and delta chain; disulfide-linked. The gamma-delta TR is associated with the transmembrane signaling CD3 coreceptor proteins following the stoichiometry: a single gamma-delta TR heterodimer associates with one CD3D-CD3E heterodimer, one CD3G-CD3E heterodimer and one CD247 homodimer forming a stable octameric structure. Upon activation, gamma-delta TR complex associates with FCER1G to initiate intracellular signaling.

Its subcellular location is the cell membrane. Its function is as follows. Probable non-functional open reading frame (ORF) of V region of the variable domain of T cell receptor (TR) gamma chain. Non-functional ORF generally cannot participate in the synthesis of a productive T cell receptor (TR) chain due to altered V-(D)-J or switch recombination and/or splicing site (at mRNA level) and/or conserved amino acid change (protein level). Gamma-delta TRs recognize a variety of self and foreign non-peptide antigens frequently expressed at the epithelial boundaries between the host and external environment, including endogenous lipids presented by MH-like protein CD1D and phosphoantigens presented by butyrophilin-like molecule BTN3A1. Upon antigen recognition induces rapid, innate-like immune responses involved in pathogen clearance and tissue repair. Binding of gamma-delta TR complex to antigen triggers phosphorylation of immunoreceptor tyrosine-based activation motifs (ITAMs) in the CD3 chains by the LCK and FYN kinases, allowing the recruitment, phosphorylation, and activation of ZAP70 that facilitates phosphorylation of the scaffolding proteins LCP2 and LAT. This lead to the formation of a supramolecular signalosome that recruits the phospholipase PLCG1, resulting in calcium mobilization and ERK activation, ultimately leading to T cell expansion and differentiation into effector cells. Gamma-delta TRs are produced through somatic rearrangement of a limited repertoire of variable (V), diversity (D), and joining (J) genes. The potential diversity of gamma-delta TRs is conferred by the unique ability to rearrange (D) genes in tandem and to utilize all three reading frames. The combinatorial diversity is considerably increased by the sequence exonuclease trimming and random nucleotide (N) region additions which occur during the V-(D)-J rearrangements. In Homo sapiens (Human), this protein is Probable non-functional T cell receptor gamma variable.